We begin with the raw amino-acid sequence, 57 residues long: UPF0391 membrane protein bsl5717 (57 aa).

2 helical membrane passes run 6-26 and 35-55; these read WALIFLLVSIVAGVLGFTGIS and FLFYVFVVIFLVLLILGLTIF.

Belongs to the UPF0391 family.

It localises to the cell membrane. This is UPF0391 membrane protein bsl5717 from Bradyrhizobium diazoefficiens (strain JCM 10833 / BCRC 13528 / IAM 13628 / NBRC 14792 / USDA 110).